The primary structure comprises 417 residues: MLNLGRARTGRQNRSMSFEGLDFADPKKNNNYMGKIVLVMTLTAMCILLLNQSPTFNTPSVFSRSEPGVTHVLVTGGAGYIGSHAALRLLKDSYRVTIVDNLSRGNLGAVKILQQLFPEPGKLQFIYADLGDANAVNKIFSENAFDAVMHFAAVAYVGESTQFPLKYYHNITSNTLVVLETMAAHGVKTLIYSSTCATYGEPEKMPITEETPQVPINPYGKAKKMAEDIILDFSKNSIMAVMILRYFNVIGSDPEGRLGEAPRPELSEHGRISGACFDAARGIIPGLQIKGTDYKTVDGTCVRDYIDVTDLVDAHVKALEKAKPRKVGIFNVGTGKGSSVKEFVEACKKATGVDIKVDYLERRAGDYAEVYSDPRKIKEELNWTAKHTNLQESLKMAWRWQKLHRSGYGSSSLVSAY.

At 1 to 31 (MLNLGRARTGRQNRSMSFEGLDFADPKKNNN) the chain is on the cytoplasmic side. A helical; Signal-anchor for type II membrane protein membrane pass occupies residues 32–54 (YMGKIVLVMTLTAMCILLLNQSP). Residues 55-417 (TFNTPSVFSR…YGSSSLVSAY (363 aa)) lie on the Lumenal side of the membrane. 71–102 (HVLVTGGAGYIGSHAALRLLKDSYRVTIVDNL) lines the NAD(+) pocket. The Proton acceptor role is filled by Tyr-219.

Belongs to the NAD(P)-dependent epimerase/dehydratase family. Requires NAD(+) as cofactor.

The protein resides in the golgi apparatus. It is found in the golgi stack membrane. The enzyme catalyses UDP-beta-L-arabinopyranose = UDP-alpha-D-xylose. It participates in nucleotide-sugar biosynthesis; UDP-L-arabinose biosynthesis; UDP-L-arabinose from UDP-alpha-D-xylose: step 1/1. It functions in the pathway cell wall biogenesis; cell wall polysaccharide biosynthesis. This is Putative UDP-arabinose 4-epimerase 2 from Arabidopsis thaliana (Mouse-ear cress).